A 156-amino-acid chain; its full sequence is Small ribosomal subunit protein uS7 (156 aa).

It belongs to the universal ribosomal protein uS7 family. As to quaternary structure, part of the 30S ribosomal subunit. Contacts proteins S9 and S11.

Functionally, one of the primary rRNA binding proteins, it binds directly to 16S rRNA where it nucleates assembly of the head domain of the 30S subunit. Is located at the subunit interface close to the decoding center, probably blocks exit of the E-site tRNA. The chain is Small ribosomal subunit protein uS7 from Brevibacillus brevis (strain 47 / JCM 6285 / NBRC 100599).